A 302-amino-acid chain; its full sequence is Phosphoribosylaminoimidazole-succinocarboxamide synthase (302 aa).

Belongs to the SAICAR synthetase family.

The catalysed reaction is 5-amino-1-(5-phospho-D-ribosyl)imidazole-4-carboxylate + L-aspartate + ATP = (2S)-2-[5-amino-1-(5-phospho-beta-D-ribosyl)imidazole-4-carboxamido]succinate + ADP + phosphate + 2 H(+). Its pathway is purine metabolism; IMP biosynthesis via de novo pathway; 5-amino-1-(5-phospho-D-ribosyl)imidazole-4-carboxamide from 5-amino-1-(5-phospho-D-ribosyl)imidazole-4-carboxylate: step 1/2. This is Phosphoribosylaminoimidazole-succinocarboxamide synthase from Ralstonia nicotianae (strain ATCC BAA-1114 / GMI1000) (Ralstonia solanacearum).